The primary structure comprises 233 residues: UPF0173 metal-dependent hydrolase Acid345_3437 (233 aa).

This sequence belongs to the UPF0173 family.

This is UPF0173 metal-dependent hydrolase Acid345_3437 from Koribacter versatilis (strain Ellin345).